Consider the following 279-residue polypeptide: Dehydrogenase/reductase SDR family member 4 (279 aa).

An NADP(+)-binding site is contributed by 37–61 (LVTASTDGIGFAIARRLAEDGAHVV). N6-acetyllysine; alternate is present on K93. K93 is modified (N6-succinyllysine; alternate). K106 carries the post-translational modification N6-acetyllysine. S170 provides a ligand contact to substrate. Y183 serves as the catalytic Proton acceptor. K187 lines the NADP(+) pocket. K217 carries the post-translational modification N6-acetyllysine; alternate. At K217 the chain carries N6-succinyllysine; alternate. At S221 the chain carries Phosphoserine. N6-succinyllysine occurs at positions 228 and 235. The Peroxisomal targeting signal motif lies at 277–279 (SRL).

Belongs to the short-chain dehydrogenases/reductases (SDR) family. In terms of assembly, homotetramer.

The protein resides in the peroxisome. It carries out the reaction a secondary alcohol + NADP(+) = a ketone + NADPH + H(+). The enzyme catalyses 3alpha-hydroxy-5beta-pregnan-20-one + NADP(+) = 5beta-pregnan-3,20-dione + NADPH + H(+). It catalyses the reaction 5beta-dihydrotestosterone + NADPH + H(+) = 5beta-androstane-3alpha,17beta-diol + NADP(+). The catalysed reaction is all-trans-retinol + NADP(+) = all-trans-retinal + NADPH + H(+). It carries out the reaction isatin + NADPH + H(+) = 3-hydroxyindolin-2-one + NADP(+). In terms of biological role, NADPH-dependent oxidoreductase which catalyzes the reduction of a variety of compounds bearing carbonyl groups including ketosteroids, alpha-dicarbonyl compounds, aldehydes, aromatic ketones and quinones. Reduces all-trans-retinal and 9-cis retinal. Reduces 3-ketosteroids and benzil into 3alpha-hydroxysteroids and S-benzoin, respectively, in contrast to the stereoselectivity of primates DHRS4s which produce 3beta-hydroxysteroids and R-benzoin. In the reverse reaction, catalyzes the NADP-dependent oxidation of 3alpha-hydroxysteroids and alcohol, but with much lower efficiency. Involved in the metabolism of 3alpha-hydroxysteroids, retinoid, isatin and xenobiotic carbonyl compounds. This is Dehydrogenase/reductase SDR family member 4 from Mus musculus (Mouse).